A 196-amino-acid chain; its full sequence is dCTP deaminase, dUMP-forming (196 aa).

Residues 101 to 106 (KSSLGR), aspartate 119, 127 to 129 (TLE), glutamine 148, tyrosine 162, and glutamine 174 contribute to the dCTP site. Glutamate 129 (proton donor/acceptor) is an active-site residue.

It belongs to the dCTP deaminase family. Homotrimer.

The catalysed reaction is dCTP + 2 H2O = dUMP + NH4(+) + diphosphate. It functions in the pathway pyrimidine metabolism; dUMP biosynthesis; dUMP from dCTP: step 1/1. Functionally, bifunctional enzyme that catalyzes both the deamination of dCTP to dUTP and the hydrolysis of dUTP to dUMP without releasing the toxic dUTP intermediate. This Tropheryma whipplei (strain TW08/27) (Whipple's bacillus) protein is dCTP deaminase, dUMP-forming.